A 188-amino-acid polypeptide reads, in one-letter code: Elongation factor P (188 aa).

This sequence belongs to the elongation factor P family.

It is found in the cytoplasm. Its pathway is protein biosynthesis; polypeptide chain elongation. Its function is as follows. Involved in peptide bond synthesis. Stimulates efficient translation and peptide-bond synthesis on native or reconstituted 70S ribosomes in vitro. Probably functions indirectly by altering the affinity of the ribosome for aminoacyl-tRNA, thus increasing their reactivity as acceptors for peptidyl transferase. This chain is Elongation factor P, found in Pseudomonas aeruginosa (strain LESB58).